Reading from the N-terminus, the 256-residue chain is Lysine-rich coiled-coil protein 1 (256 aa).

2 disordered regions span residues 61 to 83 and 141 to 256; these read QRIPSGTNHSYPRSCSSSQTEDR and GHST…ILGF. Polar residues-rich tracts occupy residues 64–79 and 141–153; these read PSGTNHSYPRSCSSSQ and GHSTIDPQVSHRQ. 2 stretches are compositionally biased toward basic and acidic residues: residues 161–188 and 218–227; these read HLEEGRERQEERPKHERKRSSEEMDLNK and KNRDVSSKKE. The stretch at 208–247 forms a coiled coil; it reads TEKLKNRKEKKNRDVSSKKEDRKRRKEKKEQGEERTEEEM.

This is Lysine-rich coiled-coil protein 1 (Krcc1) from Rattus norvegicus (Rat).